A 310-amino-acid polypeptide reads, in one-letter code: Pantothenate kinase (310 aa).

95-102 (GSVAVGKS) lines the ATP pocket.

Belongs to the prokaryotic pantothenate kinase family.

The protein localises to the cytoplasm. It carries out the reaction (R)-pantothenate + ATP = (R)-4'-phosphopantothenate + ADP + H(+). The protein operates within cofactor biosynthesis; coenzyme A biosynthesis; CoA from (R)-pantothenate: step 1/5. The protein is Pantothenate kinase of Rhodococcus jostii (strain RHA1).